The sequence spans 356 residues: Protein-arginine kinase (356 aa).

Residues 24–256 form the Phosphagen kinase C-terminal domain; sequence IIISSRVRVA…RQILAQEQAA (233 aa). ATP-binding positions include 27-31, His-93, Arg-127, 178-182, and 209-214; these read SSRVR, RASVM, and RGLYGE. The RDXXRA motif of the pArg binding pocket involved in allosteric regulation motif lies at 339 to 344; that stretch reads RDIFRA.

Belongs to the ATP:guanido phosphotransferase family.

The enzyme catalyses L-arginyl-[protein] + ATP = N(omega)-phospho-L-arginyl-[protein] + ADP + H(+). Its activity is regulated as follows. Appears to be allosterically activated by the binding of pArg-containing polypeptides to the pArg-binding pocket localized in the C-terminal domain of McsB. Functionally, catalyzes the specific phosphorylation of arginine residues in proteins. This Pelotomaculum thermopropionicum (strain DSM 13744 / JCM 10971 / SI) protein is Protein-arginine kinase.